We begin with the raw amino-acid sequence, 171 residues long: Lipoprotein signal peptidase (171 aa).

The next 3 helical transmembrane spans lie at 8-28, 64-84, and 96-118; these read SFLW…YIVV, WQQY…VYFL, and SAYA…NGFV. Catalysis depends on residues Asp-120 and Asp-138. Residues 133–153 traverse the membrane as a helical segment; that stretch reads VFNIADIAICIGAGLLALDAF.

This sequence belongs to the peptidase A8 family.

Its subcellular location is the cell inner membrane. It carries out the reaction Release of signal peptides from bacterial membrane prolipoproteins. Hydrolyzes -Xaa-Yaa-Zaa-|-(S,diacylglyceryl)Cys-, in which Xaa is hydrophobic (preferably Leu), and Yaa (Ala or Ser) and Zaa (Gly or Ala) have small, neutral side chains.. It participates in protein modification; lipoprotein biosynthesis (signal peptide cleavage). This protein specifically catalyzes the removal of signal peptides from prolipoproteins. The chain is Lipoprotein signal peptidase from Haemophilus influenzae (strain 86-028NP).